A 420-amino-acid polypeptide reads, in one-letter code: 20-oxo-5-O-mycaminosyltylactone 23-monooxygenase (420 aa).

Residues 1–28 form a disordered region; that stretch reads MSSSGDARPSQKGILLPAARANDTDEAA. 5 residues coordinate heme: His-118, Arg-122, Arg-311, His-367, and Cys-369.

It belongs to the cytochrome P450 family.

The catalysed reaction is 20-oxo-5-O-beta-D-mycaminosyltylonolide + 2 reduced [2Fe-2S]-[ferredoxin] + O2 + 2 H(+) = 5-O-beta-D-mycaminosyltylonolide + 2 oxidized [2Fe-2S]-[ferredoxin] + H2O. The protein operates within antibiotic biosynthesis; tylosin biosynthesis. In terms of biological role, involved in the biosynthesis of the complex macrolide antibiotic tylosin. Catalyzes the hydroxylation of 20-oxo-5-O-beta-mycaminosyltylactone at the C-23 position to yield 5-O-beta-mycaminosyltylonolide. This Streptomyces fradiae (Streptomyces roseoflavus) protein is 20-oxo-5-O-mycaminosyltylactone 23-monooxygenase.